We begin with the raw amino-acid sequence, 1359 residues long: Nuclear protein STH1/NPS1 (1359 aa).

A Phosphoserine modification is found at Ser38. Positions 307–383 (LERQQLLEKR…AKQRLAALKS (77 aa)) constitute an HSA domain. Residues 482-647 (VSLYNNHLNG…WALLNFVLPK (166 aa)) form the Helicase ATP-binding domain. Residue 495 to 502 (DEMGLGKT) participates in ATP binding. Residues 597–600 (DEGH) carry the DEGH box motif. The 162-residue stretch at 795–956 (LLDRVLPKFK…NKSTAEEQEA (162 aa)) folds into the Helicase C-terminal domain. The interval 1090 to 1246 (RERRRLRQNG…TAAKKTKTKS (157 aa)) is disordered. The segment covering 1108–1126 (LENTPEASETSLIENNSFT) has biased composition (polar residues). Basic residues-rich tracts occupy residues 1143–1154 (RSKRRSSRKKRT) and 1198–1210 (KKKK…KIKL). Positions 1219-1232 (NDGKRAEEKPESKS) are enriched in basic and acidic residues. A compositionally biased stretch (basic residues) spans 1233–1246 (PAKKTAAKKTKTKS). A Bromo domain is found at 1257 to 1357 (KLVEEMREQL…EFTDEWFKEH (101 aa)).

This sequence belongs to the SNF2/RAD54 helicase family. In terms of assembly, interacts directly with SFH1, CSE4, histones H3, H4 and H2B, and via its N-terminus, with RSC8. Interacts with LDB7, NPL6 and RTT102. Component of the two forms of the RSC complex composed of at least either RSC1 or RSC2, and ARP7, ARP9, LDB7, NPL6, RSC3, RSC30, RSC4, RSC58, RSC6, RSC8, RSC9, SFH1, STH1, HTL1 and probably RTT102. The complexes interact with histone and histone variant components of centromeric chromatin.

It localises to the nucleus. The enzyme catalyses ATP + H2O = ADP + phosphate + H(+). In terms of biological role, catalytic component of the chromatin structure-remodeling complex (RSC), which is involved in transcription regulation and nucleosome positioning. RSC is responsible for the transfer of a histone octamer from a nucleosome core particle to naked DNA. The reaction requires ATP and involves an activated RSC-nucleosome intermediate. Remodeling reaction also involves DNA translocation, DNA twist and conformational change. As a reconfigurer of centromeric and flanking nucleosomes, RSC complex is required both for proper kinetochore function in chromosome segregation and, via a PKC1-dependent signaling pathway, for organization of the cellular cytoskeleton. This subunit is the essential ATPase of the complex. It is a DNA translocase capable of nucleosome remodeling. Required for full expression of early meiotic genes. Essential for mitotic growth and repression of CHA1 expression. Also involved in G2 phase control. The chain is Nuclear protein STH1/NPS1 (STH1) from Saccharomyces cerevisiae (strain ATCC 204508 / S288c) (Baker's yeast).